The chain runs to 400 residues: CCA-adding enzyme (400 aa).

Gly8 and Arg11 together coordinate ATP. Residues Gly8 and Arg11 each contribute to the CTP site. Mg(2+)-binding residues include Asp21 and Asp23. Arg91, Arg137, and Arg140 together coordinate ATP. Positions 91, 137, and 140 each coordinate CTP. The 106-residue stretch at 217–322 (NFQYAMTALK…IDLFNKWDVW (106 aa)) folds into the HD domain.

The protein belongs to the tRNA nucleotidyltransferase/poly(A) polymerase family. Bacterial CCA-adding enzyme type 2 subfamily. Mg(2+) serves as cofactor.

It catalyses the reaction a tRNA precursor + 2 CTP + ATP = a tRNA with a 3' CCA end + 3 diphosphate. The enzyme catalyses a tRNA with a 3' CCA end + 2 CTP + ATP = a tRNA with a 3' CCACCA end + 3 diphosphate. In terms of biological role, catalyzes the addition and repair of the essential 3'-terminal CCA sequence in tRNAs without using a nucleic acid template. Adds these three nucleotides in the order of C, C, and A to the tRNA nucleotide-73, using CTP and ATP as substrates and producing inorganic pyrophosphate. tRNA 3'-terminal CCA addition is required both for tRNA processing and repair. Also involved in tRNA surveillance by mediating tandem CCA addition to generate a CCACCA at the 3' terminus of unstable tRNAs. While stable tRNAs receive only 3'-terminal CCA, unstable tRNAs are marked with CCACCA and rapidly degraded. The chain is CCA-adding enzyme from Actinobacillus succinogenes (strain ATCC 55618 / DSM 22257 / CCUG 43843 / 130Z).